Reading from the N-terminus, the 490-residue chain is Tegument protein VP16 (490 aa).

A disordered region spans residues 11 to 35; it reads DADGVSPPPPRPAGGPKNTPAAPPL. S16, S351, S411, and S453 each carry phosphoserine. A transcriptional activation region spans residues 411–490; sequence STTAPITDVS…DAMGIDDFGG (80 aa).

This sequence belongs to the herpesviridae tegument protein VP16 protein family. As to quaternary structure, interacts with VP22. Interacts with gH (via C-terminus). Interacts with the virion host shutoff protein (vhs). Interacts with VP11/12. Associates with the VP16-induced complex; binding to host HCFC1 activates VP16 for association with the octamer motif-binding host protein POU2F1, to form a multiprotein-DNA complex responsible for activating transcription of the viral immediate early genes.

It localises to the virion tegument. It is found in the host nucleus. In terms of biological role, transcriptional activator of immediate-early (IE) gene products (alpha genes). Acts as a key activator of lytic infection by initiating the lytic program through the assembly of the transcriptional regulatory VP16-induced complex composed of VP16 and two cellular factors, HCFC1 and POU2F 1. VP16-induced complex represents a regulatory switch: when it is on, it promotes IE-gene expression and thus lytic infection, and when it is off, it limits IE-gene transcription favoring latent infection. Functionally, may play a role in the aggregation of tegument proteins around nucleocapsids during virus morphogenesis. The polypeptide is Tegument protein VP16 (Human herpesvirus 2 (strain 333) (HHV-2)).